A 575-amino-acid polypeptide reads, in one-letter code: Arginine--tRNA ligase (575 aa).

Residues 130–140 (ANPTGPMHVGH) carry the 'HIGH' region motif.

It belongs to the class-I aminoacyl-tRNA synthetase family. As to quaternary structure, monomer.

It localises to the cytoplasm. It catalyses the reaction tRNA(Arg) + L-arginine + ATP = L-arginyl-tRNA(Arg) + AMP + diphosphate. The polypeptide is Arginine--tRNA ligase (Magnetococcus marinus (strain ATCC BAA-1437 / JCM 17883 / MC-1)).